A 186-amino-acid chain; its full sequence is Elongation factor P (186 aa).

The protein belongs to the elongation factor P family.

The protein resides in the cytoplasm. It functions in the pathway protein biosynthesis; polypeptide chain elongation. Its function is as follows. Involved in peptide bond synthesis. Stimulates efficient translation and peptide-bond synthesis on native or reconstituted 70S ribosomes in vitro. Probably functions indirectly by altering the affinity of the ribosome for aminoacyl-tRNA, thus increasing their reactivity as acceptors for peptidyl transferase. The protein is Elongation factor P of Clostridium acetobutylicum (strain ATCC 824 / DSM 792 / JCM 1419 / IAM 19013 / LMG 5710 / NBRC 13948 / NRRL B-527 / VKM B-1787 / 2291 / W).